A 91-amino-acid chain; its full sequence is Large ribosomal subunit protein bL27 (91 aa).

Residues 1-13 (MATKKSGGSSCNG) show a composition bias toward polar residues. Residues 1-20 (MATKKSGGSSCNGRDSRGRR) are disordered.

Belongs to the bacterial ribosomal protein bL27 family.

In Anaplasma phagocytophilum (strain HZ), this protein is Large ribosomal subunit protein bL27.